The sequence spans 300 residues: Delta-9 desaturase-like 4 protein (300 aa).

The next 2 membrane-spanning stretches (helical) occupy residues 39–59 (VVVI…WEAL) and 61–81 (FGLV…HRNL). The short motif at 78–83 (HRNLSH) is the Histidine box-1 element. The Histidine box-2 motif lies at 115-119 (HRFHH). 2 helical membrane passes run 175–195 (IAVH…LPYL) and 200–220 (GVGI…CHIW). The Histidine box-3 signature appears at 247 to 251 (HNNHH).

This sequence belongs to the fatty acid desaturase type 1 family. The cofactor is Fe cation.

Its subcellular location is the endoplasmic reticulum membrane. It participates in lipid metabolism; polyunsaturated fatty acid biosynthesis. The chain is Delta-9 desaturase-like 4 protein from Arabidopsis thaliana (Mouse-ear cress).